Reading from the N-terminus, the 297-residue chain is Cytosolic Fe-S cluster assembly factor CFD1 (297 aa).

Position 15–22 (15–22 (GKGGVGKS)) interacts with ATP. [4Fe-4S] cluster contacts are provided by Cys-216 and Cys-219.

The protein belongs to the Mrp/NBP35 ATP-binding proteins family. NUBP2/CFD1 subfamily. Heterotetramer of 2 NBP35 and 2 CFD1 chains. It depends on [4Fe-4S] cluster as a cofactor.

It localises to the cytoplasm. Component of the cytosolic iron-sulfur (Fe/S) protein assembly (CIA) machinery. Required for maturation of extramitochondrial Fe-S proteins. The NBP35-CFD1 heterotetramer forms a Fe-S scaffold complex, mediating the de novo assembly of an Fe-S cluster and its transfer to target apoproteins. This is Cytosolic Fe-S cluster assembly factor CFD1 from Phaeosphaeria nodorum (strain SN15 / ATCC MYA-4574 / FGSC 10173) (Glume blotch fungus).